Reading from the N-terminus, the 297-residue chain is Probable endonuclease 4 (297 aa).

The tract at residues 1-21 (MPEIGAHVSAAGGPQRAPERG) is disordered. Positions 67, 107, 145, 179, 182, 216, 229, 231, and 261 each coordinate Zn(2+).

Belongs to the AP endonuclease 2 family. The cofactor is Zn(2+).

It carries out the reaction Endonucleolytic cleavage to 5'-phosphooligonucleotide end-products.. Its function is as follows. Endonuclease IV plays a role in DNA repair. It cleaves phosphodiester bonds at apurinic or apyrimidinic (AP) sites, generating a 3'-hydroxyl group and a 5'-terminal sugar phosphate. This Halorhodospira halophila (strain DSM 244 / SL1) (Ectothiorhodospira halophila (strain DSM 244 / SL1)) protein is Probable endonuclease 4.